A 630-amino-acid polypeptide reads, in one-letter code: Transposase B from transposon PsiTn554 (630 aa).

The Core-binding (CB) domain maps to 216–302 (TYFKQLVKRY…ILEGLFSTLH (87 aa)). One can recognise a Tyr recombinase domain in the interval 326-513 (AKPRFIDEFV…FDETLKNEFT (188 aa)). Residues Arg363, Lys391, His465, Arg468, and His491 contribute to the active site. Catalysis depends on Tyr500, which acts as the O-(3'-phospho-DNA)-tyrosine intermediate.

Belongs to the 'phage' integrase family.

The sequence is that of Transposase B from transposon PsiTn554 (tnpB) from Staphylococcus aureus.